The primary structure comprises 243 residues: 6-carboxyhexanoate--CoA ligase (243 aa).

It belongs to the BioW family. As to quaternary structure, homodimer. It depends on Mg(2+) as a cofactor.

It carries out the reaction heptanedioate + ATP + CoA = 6-carboxyhexanoyl-CoA + AMP + diphosphate. It participates in metabolic intermediate metabolism; pimeloyl-CoA biosynthesis; pimeloyl-CoA from pimelate: step 1/1. Catalyzes the transformation of pimelate into pimeloyl-CoA with concomitant hydrolysis of ATP to AMP. This is 6-carboxyhexanoate--CoA ligase from Corynebacterium pseudotuberculosis (strain FRC41).